The primary structure comprises 166 residues: NAD(P)H-quinone oxidoreductase subunit I, chloroplastic (166 aa).

2 consecutive 4Fe-4S ferredoxin-type domains span residues 55 to 84 and 95 to 124; these read GRIH…VDWQ and VNYS…MTEE. [4Fe-4S] cluster-binding residues include Cys-64, Cys-67, Cys-70, Cys-74, Cys-104, Cys-107, Cys-110, and Cys-114.

Belongs to the complex I 23 kDa subunit family. NDH is composed of at least 16 different subunits, 5 of which are encoded in the nucleus. It depends on [4Fe-4S] cluster as a cofactor.

Its subcellular location is the plastid. The protein localises to the chloroplast thylakoid membrane. The catalysed reaction is a plastoquinone + NADH + (n+1) H(+)(in) = a plastoquinol + NAD(+) + n H(+)(out). It carries out the reaction a plastoquinone + NADPH + (n+1) H(+)(in) = a plastoquinol + NADP(+) + n H(+)(out). Its function is as follows. NDH shuttles electrons from NAD(P)H:plastoquinone, via FMN and iron-sulfur (Fe-S) centers, to quinones in the photosynthetic chain and possibly in a chloroplast respiratory chain. The immediate electron acceptor for the enzyme in this species is believed to be plastoquinone. Couples the redox reaction to proton translocation, and thus conserves the redox energy in a proton gradient. In Coreopsis petrophiloides (Tickseed), this protein is NAD(P)H-quinone oxidoreductase subunit I, chloroplastic.